A 425-amino-acid polypeptide reads, in one-letter code: Histone-binding protein RBBP4 (425 aa).

Ala2 is subject to N-acetylalanine. Lys4 is modified (N6-acetyllysine; alternate). Residue Lys4 forms a Glycyl lysine isopeptide (Lys-Gly) (interchain with G-Cter in SUMO2); alternate linkage. Residue Lys4 forms a Glycyl lysine isopeptide (Lys-Gly) (interchain with G-Cter in ubiquitin); alternate linkage. 7 WD repeats span residues 32-125, 126-175, 176-223, 225-270, 271-314, 315-371, and 372-404; these read YDLV…NHEG, EVNR…RLRG, HQKE…KTIF, GHTA…HSVD, AHTA…HSFE, SHKD…FIHG, and GHTA…VWQM. Ser110 carries the phosphoserine modification. The residue at position 160 (Lys160) is an N6-acetyllysine; alternate. Residue Lys160 forms a Glycyl lysine isopeptide (Lys-Gly) (interchain with G-Cter in SUMO2); alternate linkage. Ser355 carries the phosphoserine modification.

This sequence belongs to the WD repeat RBAP46/RBAP48/MSI1 family. Binds directly to helix 1 of the histone fold of histone H4, a region that is not accessible when H4 is in chromatin. Subunit of the chromatin assembly factor 1 (CAF-1) complex, which is composed of RBBP4, CHAF1B and CHAF1A. Subunit of the core histone deacetylase (HDAC) complex, which is composed of HDAC1, HDAC2, RBBP4 and RBBP7. The core HDAC complex associates with SIN3A, ARID4B/SAP180, SAP18, SAP30, SAP130, SUDS3/SAP45 and possibly ARID4A/RBP1 and ING1 to form the SIN3 HDAC complex. Component of the nucleosome remodeling and deacetylase (NuRD) repressor complex, composed of core proteins MTA1, MTA2, MTA3, RBBP4, RBBP7, HDAC1, HDAC2, MBD2, MBD3, and peripherally associated proteins CDK2AP1, CDK2AP2, GATAD2A, GATAD2B, CHD3, CHD4 and CHD5. The exact stoichiometry of the NuRD complex is unknown, and some subunits such as MBD2 and MBD3, GATAD2A and GATAD2B, and CHD3, CHD4 and CHD5 define mutually exclusive NuRD complexes. Interacts with ZNF512B; the interaction is direct and may play a role in repressing gene expression. The NuRD complex may also interact with MBD3L1 and MBD3L2. Component of the PRC2 complex, which consists of the core subunits EED, EZH1 or EZH2, SUZ12, and RBBP4, and various combinations of accessory subunits including AEBP2, JARID2, PHF19, MTF2 and EPOP. Forms a monomeric PRC2.2 (class 2) complex consisting of at least SUZ12, RBBP4, AEBP2 and JARID2. Forms a dimeric PRC2.1 (class 1, PRC-PCL) complex consisting of at least SUZ12, RBBP4, and PHF19; PHF19 stabilizes the dimeric structure which enhances PRC2 interaction with chromatin. Component of the NURF-1 ISWI chromatin remodeling complex (also called the nucleosome-remodeling factor (NURF) complex) at least composed of SMARCA1 (isoform 2), BPTF, RBBP4 and RBBP7. Within the complex interacts with isoform 2 of SMARCA1. Component of the BPFT-SMARCA1 complex at least composed of SMARCA1 (isoform 1), BPFT, RBBP4 and RBBP7; the complex is catalytically inactive and does not remodel chromatin. Within the complex interacts with isoform 1 of SMARCA1. Interacts with the ISWI chromatin remodeling complex component SMARCA5; the interaction is direct. Interacts with the viral protein-binding domain of the retinoblastoma protein (RB1). Component of the DREAM complex (also named LINC complex) at least composed of E2F4, E2F5, LIN9, LIN37, LIN52, LIN54, MYBL1, MYBL2, RBL1, RBL2, RBBP4, TFDP1 and TFDP2. The complex exists in quiescent cells where it represses cell cycle-dependent genes. It dissociates in S phase when LIN9, LIN37, LIN52 and LIN54 form a subcomplex that binds to MYBL2. Found in a complex composed of at least SINHCAF, SIN3A, HDAC1, SAP30, RBBP4, OGT and TET1. Interacts with ZNF827; the interaction is direct and recruits RBBP4 to telomeres. Interacts with MTA1; the interaction is direct and mutually exclusive with binding histone H4. Interacts with ARMC12 (via ARM domains). Interacts with BRCA1. Interacts with CDK2AP1. Interacts with CREBBP, and this interaction may be enhanced by the binding of phosphorylated CREB1 to CREBBP. Interacts with ERCC6. Interacts with HDAC7. Interacts with PHF6. Interacts with PWWP2B. Interacts with SPEN/MINT. Interacts with SUV39H1.

The protein localises to the nucleus. Its subcellular location is the chromosome. It is found in the telomere. In terms of biological role, core histone-binding subunit that may target chromatin assembly factors, chromatin remodeling factors and histone deacetylases to their histone substrates in a manner that is regulated by nucleosomal DNA. Component of the chromatin assembly factor 1 (CAF-1) complex, which is required for chromatin assembly following DNA replication and DNA repair. Component of the core histone deacetylase (HDAC) complex, which promotes histone deacetylation and consequent transcriptional repression. Component of the nucleosome remodeling and histone deacetylase complex (the NuRD complex), which promotes transcriptional repression by histone deacetylation and nucleosome remodeling. Component of the PRC2 complex, which promotes repression of homeotic genes during development. Component of the NURF (nucleosome remodeling factor) complex. The polypeptide is Histone-binding protein RBBP4 (RBBP4) (Pongo abelii (Sumatran orangutan)).